The following is a 463-amino-acid chain: Aromatic amino acid transport protein AroP (463 aa).

12 consecutive transmembrane segments (helical) span residues 18–38 (TMMG…GVGI), 40–60 (AAGP…VLVM), 84–104 (FGHW…IMVM), 117–137 (AWFG…FAVV), 157–177 (VAVI…WLPG), 200–220 (VAAG…VTIA), 237–257 (AVIW…TFLM), 276–296 (ILAM…IVLA), 337–357 (AVLL…WNPA), 358–378 (GLLD…WAMI), 402–422 (AHPW…ALML), and 431–451 (VYSV…TVNS).

This sequence belongs to the amino acid-polyamine-organocation (APC) superfamily. Amino acid transporter (AAT) (TC 2.A.3.1) family.

It localises to the cell membrane. The enzyme catalyses L-phenylalanine(in) + H(+)(in) = L-phenylalanine(out) + H(+)(out). It catalyses the reaction L-tryptophan(in) + H(+)(in) = L-tryptophan(out) + H(+)(out). The catalysed reaction is L-tyrosine(in) + H(+)(in) = L-tyrosine(out) + H(+)(out). Its function is as follows. Permease that is involved in the active transport across the cytoplasmic membrane of all three aromatic amino acids, phenylalanine, tyrosine and tryptophan. In Corynebacterium glutamicum (strain ATCC 13032 / DSM 20300 / JCM 1318 / BCRC 11384 / CCUG 27702 / LMG 3730 / NBRC 12168 / NCIMB 10025 / NRRL B-2784 / 534), this protein is Aromatic amino acid transport protein AroP.